Here is a 62-residue protein sequence, read N- to C-terminus: MDASRASQLINSRETDVYCKSEPVIIRSVDEYSKMATVESLNNGTTIMAPLNDIRDSGVINH.

Belongs to the SspH family.

The protein localises to the spore core. The polypeptide is Small, acid-soluble spore protein H 1 (Clostridium botulinum (strain ATCC 19397 / Type A)).